Here is a 471-residue protein sequence, read N- to C-terminus: Trigger factor (471 aa).

The PPIase FKBP-type domain maps to 169 to 264 (GDVAVVDFKG…LKEIKEKELP (96 aa)).

This sequence belongs to the FKBP-type PPIase family. Tig subfamily.

The protein localises to the cytoplasm. The enzyme catalyses [protein]-peptidylproline (omega=180) = [protein]-peptidylproline (omega=0). Involved in protein export. Acts as a chaperone by maintaining the newly synthesized protein in an open conformation. Functions as a peptidyl-prolyl cis-trans isomerase. This is Trigger factor from Nostoc sp. (strain PCC 7120 / SAG 25.82 / UTEX 2576).